Consider the following 879-residue polypeptide: Bifunctional uridylyltransferase/uridylyl-removing enzyme (879 aa).

The tract at residues 1–340 (MANVQEDKDF…GTQDLQHAEH (340 aa)) is uridylyltransferase. The tract at residues 341-700 (ISDDFAVANK…IGDENNYGTT (360 aa)) is uridylyl-removing. Residues 458–580 (VDEHTFRLVR…VSTPERLDYL (123 aa)) enclose the HD domain. ACT domains are found at residues 701–782 (ELFI…STKR) and 809–879 (TFEL…DLEF).

It belongs to the GlnD family. It depends on Mg(2+) as a cofactor.

The enzyme catalyses [protein-PII]-L-tyrosine + UTP = [protein-PII]-uridylyl-L-tyrosine + diphosphate. The catalysed reaction is [protein-PII]-uridylyl-L-tyrosine + H2O = [protein-PII]-L-tyrosine + UMP + H(+). Its activity is regulated as follows. Uridylyltransferase (UTase) activity is inhibited by glutamine, while glutamine activates uridylyl-removing (UR) activity. Its function is as follows. Modifies, by uridylylation and deuridylylation, the PII regulatory proteins (GlnB and homologs), in response to the nitrogen status of the cell that GlnD senses through the glutamine level. Under low glutamine levels, catalyzes the conversion of the PII proteins and UTP to PII-UMP and PPi, while under higher glutamine levels, GlnD hydrolyzes PII-UMP to PII and UMP (deuridylylation). Thus, controls uridylylation state and activity of the PII proteins, and plays an important role in the regulation of nitrogen assimilation and metabolism. The sequence is that of Bifunctional uridylyltransferase/uridylyl-removing enzyme from Idiomarina loihiensis (strain ATCC BAA-735 / DSM 15497 / L2-TR).